Here is a 455-residue protein sequence, read N- to C-terminus: Glycosyl hydrolase family 109 protein (455 aa).

Residues 1–33 (MAGIDRRGFLKASMASVAAAALAGCASQQGTSA) constitute a signal peptide (tat-type signal). NAD(+)-binding positions include 62–63 (ER), Asp84, Gln112, 133–136 (WALH), 153–154 (EV), and Asn182. Substrate contacts are provided by residues Tyr211, Arg230, 242–245 (YPTH), and Tyr324. Tyr242 provides a ligand contact to NAD(+).

This sequence belongs to the Gfo/Idh/MocA family. Glycosyl hydrolase 109 subfamily. It depends on NAD(+) as a cofactor. Post-translationally, predicted to be exported by the Tat system. The position of the signal peptide cleavage has not been experimentally proven.

In terms of biological role, glycosidase. This chain is Glycosyl hydrolase family 109 protein, found in Shewanella amazonensis (strain ATCC BAA-1098 / SB2B).